Consider the following 394-residue polypeptide: 4-hydroxyphenylpyruvate dioxygenase (394 aa).

VOC domains lie at 18–149 (SFHH…LLEY) and 181–339 (FIDH…IFTK). Residues histidine 184, histidine 267, and glutamate 350 each coordinate Fe cation.

This sequence belongs to the 4HPPD family. As to quaternary structure, homodimer. Fe cation is required as a cofactor.

Its subcellular location is the cytoplasm. The protein localises to the endoplasmic reticulum membrane. It localises to the golgi apparatus membrane. It catalyses the reaction 3-(4-hydroxyphenyl)pyruvate + O2 = homogentisate + CO2. It functions in the pathway amino-acid degradation; L-phenylalanine degradation; acetoacetate and fumarate from L-phenylalanine: step 3/6. Its function is as follows. Catalyzes the conversion of 4-hydroxyphenylpyruvic acid to homogentisic acid, one of the steps in tyrosine catabolism. This chain is 4-hydroxyphenylpyruvate dioxygenase (hpd), found in Xenopus tropicalis (Western clawed frog).